The sequence spans 185 residues: Ribosome-recycling factor (185 aa).

The protein belongs to the RRF family.

The protein localises to the cytoplasm. Its function is as follows. Responsible for the release of ribosomes from messenger RNA at the termination of protein biosynthesis. May increase the efficiency of translation by recycling ribosomes from one round of translation to another. This Salinispora arenicola (strain CNS-205) protein is Ribosome-recycling factor.